A 427-amino-acid polypeptide reads, in one-letter code: Pseudouridylate synthase 1 homolog (427 aa).

Residues Gly-20 to Lys-83 form a disordered region. Residues Gln-44–Glu-79 are compositionally biased toward basic and acidic residues. Catalysis depends on Asp-146, which acts as the Nucleophile. Positions Gly-407–Asp-427 are disordered. Phosphoserine occurs at positions 415 and 420. A Phosphothreonine modification is found at Thr-426.

This sequence belongs to the tRNA pseudouridine synthase TruA family. As to quaternary structure, monomer. Forms a complex with RARG and the SRA1 RNA in the nucleus. In terms of tissue distribution, widely expressed. High levels of expression found in brain and skeletal muscle.

It is found in the mitochondrion. Its subcellular location is the nucleus. The protein resides in the cytoplasm. It catalyses the reaction a uridine in tRNA = a pseudouridine in tRNA. The catalysed reaction is uridine(38/39/40) in tRNA = pseudouridine(38/39/40) in tRNA. The enzyme catalyses a uridine in mRNA = a pseudouridine in mRNA. Its function is as follows. Pseudouridylate synthase that catalyzes pseudouridylation of tRNAs and mRNAs. Acts on positions 27/28 in the anticodon stem and also positions 34 and 36 in the anticodon of an intron containing tRNA. Also catalyzes pseudouridylation of mRNAs: mediates pseudouridylation of mRNAs with the consensus sequence 5'-UGUAG-3'. Acts as a regulator of pre-mRNA splicing by mediating pseudouridylation of pre-mRNAs at locations associated with alternatively spliced regions. Pseudouridylation of pre-mRNAs near splice sites directly regulates mRNA splicing and mRNA 3'-end processing. Involved in regulation of nuclear receptor activity through pseudouridylation of SRA1 mRNA. The chain is Pseudouridylate synthase 1 homolog from Homo sapiens (Human).